A 150-amino-acid chain; its full sequence is Ribosome maturation factor RimP (150 aa).

It belongs to the RimP family.

It is found in the cytoplasm. Functionally, required for maturation of 30S ribosomal subunits. In Thermotoga sp. (strain RQ2), this protein is Ribosome maturation factor RimP.